The sequence spans 179 residues: X-linked lymphocyte-regulated protein 5C (179 aa).

Over residues 1–11 the composition is skewed to basic and acidic residues; the sequence is MSNKEQKDMKK. Positions 1 to 75 are disordered; sequence MSNKEQKDMK…MQDFKGDDGT (75 aa). A compositionally biased stretch (low complexity) spans 42-53; sequence GTSGMGSHSSGS. The span at 56–75 shows a compositional bias: basic and acidic residues; the sequence is QEAREPVQKKMQDFKGDDGT. The stretch at 146–175 forms a coiled coil; sequence ITQQQMKILQTAIEDHETKLKNAKDMCDTF.

This sequence belongs to the XLR/SYCP3 family. In terms of tissue distribution, expressed in testis (at protein level). Also expressed in ovary. Not detected in other tissues tested.

Its subcellular location is the nucleus. The protein resides in the chromosome. In Mus musculus (Mouse), this protein is X-linked lymphocyte-regulated protein 5C.